The following is a 1160-amino-acid chain: Protein GIGANTEA (1160 aa).

Residues 158–169 (CSSTSDQASSCE) are compositionally biased toward polar residues. Disordered regions lie at residues 158 to 188 (CSSTSDQASSCESMEKRANGSPRNEPDRKPL), 600 to 629 (GGSKRPTGSDNHSSEEVTNDSRLTNGRNRC), and 800 to 830 (PVKKDEPPIEEKNINSSDGGALEKKDASRSH). The span at 170–187 (SMEKRANGSPRNEPDRKP) shows a compositional bias: basic and acidic residues. The segment covering 801-812 (VKKDEPPIEEKN) has biased composition (basic and acidic residues).

Belongs to the GIGANTEA family.

It localises to the nucleus. Its function is as follows. Involved in regulation of circadian rhythm, and in the control of the photoperiodic flowering. Acts as a suppressor of flowering under short-day (SD) and long-day (LD) conditions. Activates Hd1/CONSTANS gene. This is Protein GIGANTEA (GI) from Oryza sativa subsp. japonica (Rice).